A 791-amino-acid chain; its full sequence is Probable phosphoketolase (791 aa).

Belongs to the XFP family. Requires thiamine diphosphate as cofactor.

The protein is Probable phosphoketolase of Chlorobaculum tepidum (strain ATCC 49652 / DSM 12025 / NBRC 103806 / TLS) (Chlorobium tepidum).